We begin with the raw amino-acid sequence, 488 residues long: Glutamyl-tRNA(Gln) amidotransferase subunit A (488 aa).

Catalysis depends on charge relay system residues lysine 77 and serine 152. The active-site Acyl-ester intermediate is the serine 176.

This sequence belongs to the amidase family. GatA subfamily. Heterotrimer of A, B and C subunits.

It catalyses the reaction L-glutamyl-tRNA(Gln) + L-glutamine + ATP + H2O = L-glutaminyl-tRNA(Gln) + L-glutamate + ADP + phosphate + H(+). Allows the formation of correctly charged Gln-tRNA(Gln) through the transamidation of misacylated Glu-tRNA(Gln) in organisms which lack glutaminyl-tRNA synthetase. The reaction takes place in the presence of glutamine and ATP through an activated gamma-phospho-Glu-tRNA(Gln). This chain is Glutamyl-tRNA(Gln) amidotransferase subunit A, found in Streptococcus pyogenes serotype M2 (strain MGAS10270).